The chain runs to 1386 residues: Roundabout homolog 3 (1386 aa).

An N-terminal signal peptide occupies residues 1–20 (MLRYLLKTLLQMNLFADSLA). The Extracellular portion of the chain corresponds to 21-891 (GDISNSSELL…VRLARVLREP (871 aa)). N-linked (GlcNAc...) asparagine glycans are attached at residues asparagine 25, asparagine 34, asparagine 41, and asparagine 53. Ig-like C2-type domains are found at residues 64 to 160 (PRIV…ASLE), 166 to 253 (DDFR…AEVM), 258 to 342 (PSFL…GSLS), 347 to 440 (PQLV…ALLE), and 450 to 531 (PPVI…GEAT). The cysteines at positions 85 and 143 are disulfide-linked. Asparagine 156 carries N-linked (GlcNAc...) asparagine glycosylation. Intrachain disulfides connect cysteine 187/cysteine 236, cysteine 279/cysteine 326, and cysteine 368/cysteine 424. Asparagine 410, asparagine 459, and asparagine 503 each carry an N-linked (GlcNAc...) asparagine glycan. Cysteine 472 and cysteine 521 are joined by a disulfide. 2 disordered regions span residues 541-563 (DWGV…SQPV) and 639-662 (EPSP…EDPW). Pro residues predominate over residues 546-559 (PDPPTEPSSPPGAP). 3 consecutive Fibronectin type-III domains span residues 558–652 (APSQ…TQDS), 671–766 (VAVR…IPEE), and 771–869 (PPQG…SPPD). N-linked (GlcNAc...) asparagine glycans are attached at residues asparagine 784, asparagine 813, and asparagine 820. The helical transmembrane segment at 892 to 912 (AFLAGSGAACGALLLGLCAAL) threads the bilayer. Topologically, residues 913–1386 (YWRRKQRKEL…PGQKRREEPR (474 aa)) are cytoplasmic. 3 disordered regions span residues 965 to 989 (SWPH…NPDP), 1028 to 1310 (ELQT…AVPL), and 1327 to 1386 (SRPS…EEPR). Residues 1067–1083 (VKLLGKPVQMPSLNWPE) show a composition bias toward low complexity. Residues 1099–1112 (GPEEELEGSSEPEE) show a composition bias toward acidic residues. The span at 1158–1169 (PSPPDPPQPPTD) shows a compositional bias: pro residues. Low complexity-rich tracts occupy residues 1178-1191 (RRVP…LSVS) and 1202-1229 (PAGL…SAPG). Serine 1263 carries the post-translational modification Phosphoserine. A compositionally biased stretch (basic and acidic residues) spans 1294 to 1304 (LERERSGERKA). Polar residues predominate over residues 1333–1344 (SRGQGTSTCSTA). A compositionally biased stretch (low complexity) spans 1345–1361 (GSNSSRGSSSSRGSRGP).

This sequence belongs to the immunoglobulin superfamily. ROBO family. Monomer. Interacts (via Fibronectin type-III 1 domain) with NELL2 (via the EGF domains) with a 3:3 stoichiometry; this interaction promotes oligomerization of ROBO3 resulting in the repulsion of commissural axons in the midline.

The protein localises to the membrane. Functionally, receptor involved in axon guidance during development. Acts as a multifunctional regulator of pathfinding that simultaneously mediates NELL2 repulsion, inhibits SLIT repulsion, and facilitates Netrin-1/NTN1 attraction. In spinal cord development plays a role in guiding commissural axons probably by preventing premature sensitivity to Slit proteins thus inhibiting Slit signaling through ROBO1/ROBO2. Binding OF NELL2 to the receptor ROBO3 promotes oligomerization of ROBO3, resulting in the repulsion of commissural axons in the midline. ROBO3 also indirectly boosts axon attraction to NTN1 without interacting with NTN1 itself. This Homo sapiens (Human) protein is Roundabout homolog 3.